Here is a 1178-residue protein sequence, read N- to C-terminus: Mediator of RNA polymerase II transcription subunit 14 (1178 aa).

Residues 1–12 (MDNSVHNNSNTT) are compositionally biased toward polar residues. Disordered regions lie at residues 1-50 (MDNS…PITV) and 1064-1178 (LAGT…VVLD). 2 stretches are compositionally biased toward low complexity: residues 1074-1112 (PTQI…QGAA) and 1119-1164 (HQLQ…AQQR).

The protein belongs to the Mediator complex subunit 14 family. In terms of assembly, component of the Mediator complex.

Its subcellular location is the nucleus. Component of the Mediator complex, a coactivator involved in the regulated transcription of nearly all RNA polymerase II-dependent genes. Mediator functions as a bridge to convey information from gene-specific regulatory proteins to the basal RNA polymerase II transcription machinery. Mediator is recruited to promoters by direct interactions with regulatory proteins and serves as a scaffold for the assembly of a functional preinitiation complex with RNA polymerase II and the general transcription factors. The sequence is that of Mediator of RNA polymerase II transcription subunit 14 (RGR1) from Chaetomium globosum (strain ATCC 6205 / CBS 148.51 / DSM 1962 / NBRC 6347 / NRRL 1970) (Soil fungus).